The chain runs to 460 residues: RING finger protein DG17 (460 aa).

An RING-type zinc finger spans residues 27–67 (CPICFEFIYKKQIYQCKSGHHACKECWEKSLETKKECMTCK). 2 TRAF-type zinc fingers span residues 141 to 194 (SHLI…KKEL) and 196 to 253 (THYK…SELQ). A coiled-coil region spans residues 269–294 (IEKLTNQVGQSKKTHDELLKKIEDLS). An MATH domain is found at 320–448 (GYRNKWIISN…DDKLIIEIYI (129 aa)).

It belongs to the TNF receptor-associated factor family. A subfamily.

It is found in the cytoplasm. Probable adapter protein and signal transducer that links members of the tumor necrosis factor receptor family to different signaling pathways by association with the receptor cytoplasmic domain and kinases. This is RING finger protein DG17 (zfaA) from Dictyostelium discoideum (Social amoeba).